A 1123-amino-acid polypeptide reads, in one-letter code: Leucine-rich repeat receptor-like protein kinase PEPR1 (1123 aa).

A signal peptide spans Met1–Cys28. Residues Leu29–Gln769 lie on the Extracellular side of the membrane. An LRR 1 repeat occupies Ser31–Thr53. N-linked (GlcNAc...) asparagine glycans are attached at residues Asn57, Asn81, Asn110, and Asn121. LRR repeat units follow at residues Ser74–Leu98, Lys99–Cys122, Lys124–Ser145, Leu146–Ile170, Pro171–Ala194, Glu196–Ser218, and Ser219–Gly243. N-linked (GlcNAc...) asparagine glycans are attached at residues Asn182 and Asn217. 7 N-linked (GlcNAc...) asparagine glycosylation sites follow: Asn244, Asn252, Asn289, Asn302, Asn316, Asn321, and Asn337. 20 LRR repeats span residues Leu245–Cys266, Lys267–Cys290, Ser292–Leu314, Lys315–Cys338, Ser340–Leu362, Arg363–Ser386, Ser388–Met410, Lys412–Asn434, Ser435–Gly458, Arg459–Cys482, Thr484–Asp505, His506–Cys529, Lys530–Leu553, Gln554–Cys577, Ser579–Asn600, Trp601–Leu625, Lys626–Glu650, Leu652–Leu674, Ile675–Gly696, and Leu697–Gln721. Residues Asn398, Asn420, and Asn434 are each glycosylated (N-linked (GlcNAc...) asparagine). Asn494 carries an N-linked (GlcNAc...) asparagine glycan. N-linked (GlcNAc...) asparagine glycosylation is found at Asn531, Asn536, Asn560, Asn591, and Asn597. N-linked (GlcNAc...) asparagine glycosylation is found at Asn681 and Asn686. Asn745 is a glycosylation site (N-linked (GlcNAc...) asparagine). The helical transmembrane segment at Ile770 to Phe790 threads the bilayer. The Cytoplasmic segment spans residues Ile791–Arg1123. At Thr824 the chain carries Phosphothreonine. The 289-residue stretch at Leu827–Arg1115 folds into the Protein kinase domain. Residues Ile833–Val841 and Lys855 each bind ATP. Phosphotyrosine is present on residues Tyr901 and Tyr941. The active-site Proton acceptor is Asp954. Residue Tyr995 is modified to Phosphotyrosine.

The protein belongs to the protein kinase superfamily. Ser/Thr protein kinase family. In terms of assembly, interacts with PEP1 and BAK1. Interacts with BIK1 and PBL1. N-glycosylated.

The protein resides in the cell membrane. The catalysed reaction is L-seryl-[protein] + ATP = O-phospho-L-seryl-[protein] + ADP + H(+). It carries out the reaction L-threonyl-[protein] + ATP = O-phospho-L-threonyl-[protein] + ADP + H(+). In terms of biological role, acts as a receptor for PEP defense peptides. Unlike typical immune receptors, senses an endogenous elicitor that potentiates pathogen-associated molecular pattern (PAMP)-inducible plant responses. Involved in PAMP-triggered immunity (PTI) signaling. Interacts with and phosphorylates the kinase BIK1, a central rate-limiting kinase in PTI signaling. This Arabidopsis thaliana (Mouse-ear cress) protein is Leucine-rich repeat receptor-like protein kinase PEPR1 (PEPR1).